The primary structure comprises 788 residues: MNEKSLRVLEYFKIKDGIKKYISTSAAKKLIDELEPYGSLYEVKEHIEETKEAFELLMKKGAPPFEGAYDVTEAVSMAEKGFSLAPGQLLKVGSMLRCARKFKEYISHKEEEESYRIIEDICSGIIPLKNIEDNIFNAIIGEEEISDKASTALYSIRRSLKDKNASIKDKVNAMMRSYSKYLQENLYTIRGERYVIPVKAEYKAQVPGLVHDQSSTGATLFIEPMGLVNLNNEIKELMLKEKAEIERILRELSALIYKSIVAVKNNEKIVTELDFIFAKAKYASSINATAPHVNDKGVIDIVMGRHPLIDPAKVVPLNIYMGREFTSLVITGPNTGGKTVTLKTTGLLEVMAMSGLMIPARENSTISFFKEVYADIGDEQSIEQSLSTFSSHMTNIVRIIDDADEDSLVLFDELGAGTDPTEGAALAISILEALRKRGTKIVATTHYSELKAYALKTENVENASVEFDVETLRPTYRLLIGIPGKSNAFEISKRLGLSDYIIEEARKGISKDTLEFEDLIQNLQTRSVKAEENLRKAEFLKEQAEKFKEKYEEKVSSITETREKALHEGRREAKKIIEEAKSEADKILKDMREMERLGYSSEARQRLQESRQKLKEKLNNAEESLNISERDQGEALKSVKEGEEVFIPSLNMKGIVISTQDSKGEVGIQAGIMKINVKLKDLRKTNNNPISKKEKAVKKREARLNLKSVAQSIDLRGLDSEEAIYKTDIYLDEAYMAGLGSVTVIHGKGTGVLRNAINTMLKKNSHVKSYRLGNFGEGGTGVTVVELK.

332 to 339 (GPNTGGKT) is an ATP binding site. The Smr domain occupies 713-788 (IDLRGLDSEE…GTGVTVVELK (76 aa)).

It belongs to the DNA mismatch repair MutS family. MutS2 subfamily. In terms of assembly, homodimer. Binds to stalled ribosomes, contacting rRNA.

In terms of biological role, endonuclease that is involved in the suppression of homologous recombination and thus may have a key role in the control of bacterial genetic diversity. Acts as a ribosome collision sensor, splitting the ribosome into its 2 subunits. Detects stalled/collided 70S ribosomes which it binds and splits by an ATP-hydrolysis driven conformational change. Acts upstream of the ribosome quality control system (RQC), a ribosome-associated complex that mediates the extraction of incompletely synthesized nascent chains from stalled ribosomes and their subsequent degradation. Probably generates substrates for RQC. The polypeptide is Endonuclease MutS2 (Clostridium acetobutylicum (strain ATCC 824 / DSM 792 / JCM 1419 / IAM 19013 / LMG 5710 / NBRC 13948 / NRRL B-527 / VKM B-1787 / 2291 / W)).